The chain runs to 348 residues: Dual-specificity RNA methyltransferase RlmN (348 aa).

The active-site Proton acceptor is the glutamate 94. In terms of domain architecture, Radical SAM core spans 100-330 (GKHNWTACIS…TAIIRASRGR (231 aa)). The cysteines at positions 107 and 336 are disulfide-linked. Residues cysteine 114, cysteine 118, and cysteine 121 each coordinate [4Fe-4S] cluster. S-adenosyl-L-methionine contacts are provided by residues 163 to 164 (GE), serine 195, 217 to 219 (SLN), and asparagine 293. Cysteine 336 (S-methylcysteine intermediate) is an active-site residue.

Belongs to the radical SAM superfamily. RlmN family. [4Fe-4S] cluster is required as a cofactor.

Its subcellular location is the cytoplasm. It catalyses the reaction adenosine(2503) in 23S rRNA + 2 reduced [2Fe-2S]-[ferredoxin] + 2 S-adenosyl-L-methionine = 2-methyladenosine(2503) in 23S rRNA + 5'-deoxyadenosine + L-methionine + 2 oxidized [2Fe-2S]-[ferredoxin] + S-adenosyl-L-homocysteine. It carries out the reaction adenosine(37) in tRNA + 2 reduced [2Fe-2S]-[ferredoxin] + 2 S-adenosyl-L-methionine = 2-methyladenosine(37) in tRNA + 5'-deoxyadenosine + L-methionine + 2 oxidized [2Fe-2S]-[ferredoxin] + S-adenosyl-L-homocysteine. In terms of biological role, specifically methylates position 2 of adenine 2503 in 23S rRNA and position 2 of adenine 37 in tRNAs. m2A2503 modification seems to play a crucial role in the proofreading step occurring at the peptidyl transferase center and thus would serve to optimize ribosomal fidelity. In Syntrophus aciditrophicus (strain SB), this protein is Dual-specificity RNA methyltransferase RlmN.